Consider the following 618-residue polypeptide: UvrABC system protein C (618 aa).

The GIY-YIG domain maps to 13-92 (DKPGVYLMKN…IKKYRPKYNI (80 aa)). Residues 204-239 (LDIVENFKLNMEKAAGNLEFEKAAMLRDKINIIEKI) form the UVR domain.

Belongs to the UvrC family. In terms of assembly, interacts with UvrB in an incision complex.

The protein localises to the cytoplasm. Functionally, the UvrABC repair system catalyzes the recognition and processing of DNA lesions. UvrC both incises the 5' and 3' sides of the lesion. The N-terminal half is responsible for the 3' incision and the C-terminal half is responsible for the 5' incision. The polypeptide is UvrABC system protein C (Clostridium botulinum (strain 657 / Type Ba4)).